The primary structure comprises 201 residues: ATP-dependent Clp protease proteolytic subunit (201 aa).

The active-site Nucleophile is the Ser98. His123 is a catalytic residue.

Belongs to the peptidase S14 family. Fourteen ClpP subunits assemble into 2 heptameric rings which stack back to back to give a disk-like structure with a central cavity, resembling the structure of eukaryotic proteasomes.

The protein resides in the cytoplasm. It carries out the reaction Hydrolysis of proteins to small peptides in the presence of ATP and magnesium. alpha-casein is the usual test substrate. In the absence of ATP, only oligopeptides shorter than five residues are hydrolyzed (such as succinyl-Leu-Tyr-|-NHMec, and Leu-Tyr-Leu-|-Tyr-Trp, in which cleavage of the -Tyr-|-Leu- and -Tyr-|-Trp bonds also occurs).. Functionally, cleaves peptides in various proteins in a process that requires ATP hydrolysis. Has a chymotrypsin-like activity. Plays a major role in the degradation of misfolded proteins. The polypeptide is ATP-dependent Clp protease proteolytic subunit (Rickettsia peacockii (strain Rustic)).